The chain runs to 313 residues: MKETVISIVGPTAVGKSLLGIEMAKRFNGEVISGDSTQVYKGMDIGTAKVTKEEMDGIMHHMIDIISPDESFSVADFQLHAKKCIDDVLGRGKLPILVGGSGLYIQAVLYNYNFSEQRRDESFTKKLEEIIEEEGPNQLYTRLKEVDPVQAAKVHPNNHRRLIRALEVYETTGMTMTEYQQQQQLESPYHLILIGLDMDRDVLYDRINQRVDHMIDTGLIEEVRDLIDRGYENCQSMHAIGYKEIIQHISGNQPMEYAIDALKQHSRKYAKRQLTWFRNKMNVQWYKMEPSIIDEKIEFILNDLAGILEEKSN.

10 to 17 (GPTAVGKS) is a binding site for ATP. Residue 12–17 (TAVGKS) participates in substrate binding. The tract at residues 35–38 (DSTQ) is interaction with substrate tRNA.

Belongs to the IPP transferase family. In terms of assembly, monomer. It depends on Mg(2+) as a cofactor.

The catalysed reaction is adenosine(37) in tRNA + dimethylallyl diphosphate = N(6)-dimethylallyladenosine(37) in tRNA + diphosphate. Its function is as follows. Catalyzes the transfer of a dimethylallyl group onto the adenine at position 37 in tRNAs that read codons beginning with uridine, leading to the formation of N6-(dimethylallyl)adenosine (i(6)A). This Oceanobacillus iheyensis (strain DSM 14371 / CIP 107618 / JCM 11309 / KCTC 3954 / HTE831) protein is tRNA dimethylallyltransferase.